The sequence spans 158 residues: 2-C-methyl-D-erythritol 2,4-cyclodiphosphate synthase (158 aa).

Residues Asp-9 and His-11 each contribute to the a divalent metal cation site. 4-CDP-2-C-methyl-D-erythritol 2-phosphate is bound by residues 9 to 11 (DVH) and 35 to 36 (HS). His-43 is a binding site for a divalent metal cation. Residues 57-59 (DIG), 62-66 (FPDTD), 133-136 (TTTE), Phe-140, and Arg-143 each bind 4-CDP-2-C-methyl-D-erythritol 2-phosphate.

Belongs to the IspF family. As to quaternary structure, homotrimer. It depends on a divalent metal cation as a cofactor.

It carries out the reaction 4-CDP-2-C-methyl-D-erythritol 2-phosphate = 2-C-methyl-D-erythritol 2,4-cyclic diphosphate + CMP. It functions in the pathway isoprenoid biosynthesis; isopentenyl diphosphate biosynthesis via DXP pathway; isopentenyl diphosphate from 1-deoxy-D-xylulose 5-phosphate: step 4/6. Its function is as follows. Involved in the biosynthesis of isopentenyl diphosphate (IPP) and dimethylallyl diphosphate (DMAPP), two major building blocks of isoprenoid compounds. Catalyzes the conversion of 4-diphosphocytidyl-2-C-methyl-D-erythritol 2-phosphate (CDP-ME2P) to 2-C-methyl-D-erythritol 2,4-cyclodiphosphate (ME-CPP) with a corresponding release of cytidine 5-monophosphate (CMP). This chain is 2-C-methyl-D-erythritol 2,4-cyclodiphosphate synthase, found in Geobacillus kaustophilus (strain HTA426).